The sequence spans 664 residues: L-type lectin-domain containing receptor kinase I.3 (664 aa).

The first 21 residues, 1–21 (MACRLYLALIFSCVYLICLSS), serve as a signal peptide directing secretion. The Extracellular portion of the chain corresponds to 22 to 286 (QQETGFVYNG…PKEEKKKLSP (265 aa)). The legume-lectin like stretch occupies residues 24–257 (ETGFVYNGFE…NHYILGWSFS (234 aa)). Asn55, Asn125, Asn128, Asn181, Asn204, Asn225, and Asn267 each carry an N-linked (GlcNAc...) asparagine glycan. A helical membrane pass occupies residues 287–307 (LLIGLVILLVIPVVMVLGGVY). Residues 308–664 (WYRRKKYAEV…THTILDGHGR (357 aa)) are Cytoplasmic-facing. Residues 342–619 (FRKDCRVGKG…LNQDLPLPIF (278 aa)) enclose the Protein kinase domain. ATP contacts are provided by residues 348-356 (VGKGGFGEV) and Lys370. The active-site Proton acceptor is Asp466.

It in the C-terminal section; belongs to the protein kinase superfamily. Ser/Thr protein kinase family. The protein in the N-terminal section; belongs to the leguminous lectin family. Post-translationally, autophosphorylated on Ser and Thr residues. As to expression, mostly expressed in roots and flowers, and, to a lower extent, in leaves.

The protein localises to the cell membrane. It catalyses the reaction L-seryl-[protein] + ATP = O-phospho-L-seryl-[protein] + ADP + H(+). The catalysed reaction is L-threonyl-[protein] + ATP = O-phospho-L-threonyl-[protein] + ADP + H(+). Functionally, involved in resistance response to the pathogenic fungus Alternaria brassicicola. The chain is L-type lectin-domain containing receptor kinase I.3 from Arabidopsis thaliana (Mouse-ear cress).